A 253-amino-acid chain; its full sequence is Ubiquinone biosynthesis O-methyltransferase (253 aa).

Residues R47, G78, D99, and M141 each coordinate S-adenosyl-L-methionine.

Belongs to the methyltransferase superfamily. UbiG/COQ3 family.

The enzyme catalyses a 3-demethylubiquinol + S-adenosyl-L-methionine = a ubiquinol + S-adenosyl-L-homocysteine + H(+). The catalysed reaction is a 3-(all-trans-polyprenyl)benzene-1,2-diol + S-adenosyl-L-methionine = a 2-methoxy-6-(all-trans-polyprenyl)phenol + S-adenosyl-L-homocysteine + H(+). Its pathway is cofactor biosynthesis; ubiquinone biosynthesis. Functionally, O-methyltransferase that catalyzes the 2 O-methylation steps in the ubiquinone biosynthetic pathway. The chain is Ubiquinone biosynthesis O-methyltransferase from Rhodopseudomonas palustris (strain BisB5).